The following is a 347-amino-acid chain: Leucine-rich repeat-containing protein 69 (347 aa).

LRR repeat units follow at residues 15-37 (NTKI…EKLP), 38-60 (NLKT…RTLT), 61-82 (QLTL…IKYL), 84-105 (SLKN…VFNG), 108-129 (RLIM…IGRL), 131-152 (SLTY…LCSL), 154-175 (HLSE…IKFL), 177-198 (NLQQ…ICHL), and 200-222 (KLRV…QNLR).

Belongs to the LRRC69 family.

The polypeptide is Leucine-rich repeat-containing protein 69 (Lrrc69) (Mus musculus (Mouse)).